Here is a 396-residue protein sequence, read N- to C-terminus: Acetyl-CoA acetyltransferase (396 aa).

The active-site Acyl-thioester intermediate is the Cys88. Catalysis depends on proton acceptor residues His352 and Cys382.

It belongs to the thiolase-like superfamily. Thiolase family. As to quaternary structure, homotetramer.

The enzyme catalyses 2 acetyl-CoA = acetoacetyl-CoA + CoA. Its pathway is biopolymer metabolism; poly-(R)-3-hydroxybutanoate biosynthesis. In terms of biological role, when expressed in E.coli with Synechocystis PhaB, PhaC and PhaE confers the ability to synthesize up to 12% (w/w) poly(3-hydroxybutyrate) (PHB) depending on the carbon source. This chain is Acetyl-CoA acetyltransferase, found in Synechocystis sp. (strain ATCC 27184 / PCC 6803 / Kazusa).